We begin with the raw amino-acid sequence, 394 residues long: Elongation factor Tu-A (394 aa).

The 195-residue stretch at lysine 10–glutamine 204 folds into the tr-type G domain. A G1 region spans residues glycine 19–threonine 26. Position 19-26 (glycine 19–threonine 26) interacts with GTP. Threonine 26 serves as a coordination point for Mg(2+). The tract at residues glycine 60 to asparagine 64 is G2. The tract at residues aspartate 81–glycine 84 is G3. Residues aspartate 81–histidine 85 and asparagine 136–aspartate 139 each bind GTP. The interval asparagine 136–aspartate 139 is G4. The tract at residues serine 174 to leucine 176 is G5.

The protein belongs to the TRAFAC class translation factor GTPase superfamily. Classic translation factor GTPase family. EF-Tu/EF-1A subfamily. As to quaternary structure, monomer.

The protein localises to the cytoplasm. The enzyme catalyses GTP + H2O = GDP + phosphate + H(+). Functionally, GTP hydrolase that promotes the GTP-dependent binding of aminoacyl-tRNA to the A-site of ribosomes during protein biosynthesis. The chain is Elongation factor Tu-A from Pasteurella multocida (strain Pm70).